Reading from the N-terminus, the 802-residue chain is ATP-dependent zinc metalloprotease FTSH 7, chloroplastic (802 aa).

Residues 1-55 (MTTTFEFLQPRIHGFATCCSSNSLLYSKASRFFNDRCRVYRQNPNRFVSNSITLP) constitute a chloroplast transit peptide. Residues 87-117 (CQEDDQNESSSEEEESSQSTPAKSERKREKK) are disordered. Acidic residues predominate over residues 88 to 102 (QEDDQNESSSEEEES). The next 2 membrane-spanning stretches (helical) occupy residues 134–154 (IIQA…MFVM) and 268–288 (GGFF…AGLI). 365-372 (GLPGTGKT) lines the ATP pocket. Zn(2+) is bound at residue H590. E591 is an active-site residue. Zn(2+) contacts are provided by H594 and D673.

The protein in the N-terminal section; belongs to the AAA ATPase family. It in the C-terminal section; belongs to the peptidase M41 family. Zn(2+) serves as cofactor.

The protein resides in the plastid. The protein localises to the chloroplast thylakoid membrane. In terms of biological role, probable ATP-dependent zinc metallopeptidase. This is ATP-dependent zinc metalloprotease FTSH 7, chloroplastic (FTSH7) from Arabidopsis thaliana (Mouse-ear cress).